The sequence spans 441 residues: Protein disulfide isomerase-like 2-3 (441 aa).

An N-terminal signal peptide occupies residues 1 to 18 (MRPAVAAALLLVAAAVAA). 2 Thioredoxin domains span residues 19 to 139 (SPVS…ALLR) and 159 to 276 (SEKT…ANAA). Catalysis depends on nucleophile residues C59 and C62. The cysteines at positions 59 and 62 are disulfide-linked. Positions 143–166 (NGKTSAGSGGKKSGGSSEKTEPSA) are disordered. Active-site nucleophile residues include C195 and C198. C195 and C198 are oxidised to a cystine.

Belongs to the protein disulfide isomerase family.

Its subcellular location is the endoplasmic reticulum lumen. It carries out the reaction Catalyzes the rearrangement of -S-S- bonds in proteins.. Its function is as follows. Acts as a protein-folding catalyst that interacts with nascent polypeptides to catalyze the formation, isomerization, and reduction or oxidation of disulfide bonds. May play a role in storage protein biogenesis. The sequence is that of Protein disulfide isomerase-like 2-3 (PDIL2-3) from Oryza sativa subsp. japonica (Rice).